The chain runs to 858 residues: Receptor-like protein kinase ANXUR2 (858 aa).

A signal peptide spans 1–27; the sequence is MNEKLRILFSFLCFFYVLLVSPSQSNG. Residues 28 to 431 are Extracellular-facing; it reads QDISLSCGAS…VKKDFQGDKR (404 aa). 4 N-linked (GlcNAc...) asparagine glycosylation sites follow: Asn-133, Asn-293, Asn-303, and Asn-331. A helical transmembrane segment spans residues 432–452; the sequence is ITAFVIGSAGGVAAVLFCALC. At 453–858 the chain is on the cytoplasmic side; the sequence is FTMYQRKRKF…FSQIVNPKGR (406 aa). The Protein kinase domain occupies 521–794; that stretch reads FDESNVIGVG…GDVLWNLEFA (274 aa). ATP-binding positions include 527-535 and Lys-549; that span reads IGVGGFGKV. Asp-645 acts as the Proton acceptor in catalysis. Positions 800-858 are disordered; it reads TADGSRHRTPSNGGGSVDLGGGGGGVTVNISAGESDLGDDLSSEENSGIFSQIVNPKGR. Gly residues predominate over residues 811 to 825; it reads NGGGSVDLGGGGGGV. Polar residues predominate over residues 843-858; that stretch reads EENSGIFSQIVNPKGR.

This sequence belongs to the protein kinase superfamily. Ser/Thr protein kinase family. In terms of tissue distribution, expressed in pollen, but not in pistils or seedlings.

It is found in the cell membrane. It catalyses the reaction L-seryl-[protein] + ATP = O-phospho-L-seryl-[protein] + ADP + H(+). The enzyme catalyses L-threonyl-[protein] + ATP = O-phospho-L-threonyl-[protein] + ADP + H(+). Functionally, receptor-like protein kinase that controls pollen tube behavior by directing rupture at proper timing to release the sperm cell. This chain is Receptor-like protein kinase ANXUR2 (ANX2), found in Arabidopsis thaliana (Mouse-ear cress).